The sequence spans 594 residues: Maternal effect protein oskar (594 aa).

The segment covering 44 to 62 (QQQPKQQQQQQQHQSQHQH) has biased composition (low complexity). Positions 44–68 (QQQPKQQQQQQQHQSQHQHQQQKQK) are disordered. The HTH OST-type domain occupies 174 to 243 (EYPDIDTEIR…SGKRIFNIKP (70 aa)).

Interacts with smaug (smg). In terms of tissue distribution, posterior pole of the oocyte.

Functionally, organizes the germ plasm and directs localization of the posterior determinant nanos. Oskar protein is required to keep oskar RNA and staufen protein at the posterior pole. The polypeptide is Maternal effect protein oskar (osk) (Drosophila virilis (Fruit fly)).